The sequence spans 813 residues: Cadherin-22 (813 aa).

The first 33 residues, 1–33, serve as a signal peptide directing secretion; the sequence is MRPRPAGALRAGAALSPVLLLLLLLQLLGHLWA. Residues 34–621 are Extracellular-facing; it reads ASTPAPSSLS…AFVMAASLSP (588 aa). Cadherin domains lie at 61-165, 166-274, 275-391, 392-495, and 496-613; these read WVWN…EPRF, LHGP…PPRF, PQKM…PPEF, RPPS…NPPE, and LATP…TTAF. The N-linked (GlcNAc...) asparagine glycan is linked to Asn159. N-linked (GlcNAc...) asparagine glycans are attached at residues Asn463 and Asn609. Residues 622–642 traverse the membrane as a helical segment; it reads GALIALLVCVLILVVLALLIL. Topologically, residues 643–813 are cytoplasmic; the sequence is TLRRHHKSHL…HRGDDEAPAS (171 aa). Residues 696-726 are disordered; it reads GGDPGGGAASPPQAASSSERHSLPRGPSSPE.

Strongly expressed in the pituitary gland and the brain (in the inner granular and glomerular layers of the olfactory bulb, anterior olfactory nucleus, primary olfactory cortex, Purkinje cell layer of cerebellum, and pineal gland). Low expression in lung and heart. No expression in submandibular gland, thymus, liver, spleen, adrenal, and kidney.

The protein localises to the cell membrane. Its function is as follows. Cadherins are calcium-dependent cell adhesion proteins. They preferentially interact with themselves in a homophilic manner in connecting cells; cadherins may thus contribute to the sorting of heterogeneous cell types. PB-cadherins may have a role in the morphological organization of pituitary gland and brain tissues. The protein is Cadherin-22 (Cdh22) of Rattus norvegicus (Rat).